The sequence spans 272 residues: Diaminopimelate epimerase (272 aa).

Substrate is bound by residues Asn-11 and Asn-63. Cys-72 functions as the Proton donor in the catalytic mechanism. Residues 73-74 (GN), Asn-190, and 208-209 (ER) contribute to the substrate site. Cys-217 (proton acceptor) is an active-site residue. 218-219 (GT) serves as a coordination point for substrate.

This sequence belongs to the diaminopimelate epimerase family. As to quaternary structure, homodimer.

It localises to the cytoplasm. It carries out the reaction (2S,6S)-2,6-diaminopimelate = meso-2,6-diaminopimelate. It participates in amino-acid biosynthesis; L-lysine biosynthesis via DAP pathway; DL-2,6-diaminopimelate from LL-2,6-diaminopimelate: step 1/1. In terms of biological role, catalyzes the stereoinversion of LL-2,6-diaminopimelate (L,L-DAP) to meso-diaminopimelate (meso-DAP), a precursor of L-lysine and an essential component of the bacterial peptidoglycan. The sequence is that of Diaminopimelate epimerase from Clostridium perfringens (strain 13 / Type A).